Here is a 436-residue protein sequence, read N- to C-terminus: ABC transporter permease YtrF (436 aa).

Positions 1 to 31 (MRFKDQVHFIRRNMKKNRLRVFMTILATTMA) are cleaved as a signal peptide. The N-palmitoyl cysteine moiety is linked to residue C32. C32 is lipidated: S-diacylglycerol cysteine. Positions 115 to 165 (NMNDELKANMELEKGRVAKSENEIVVGYDFAKRLLTKKESEEYNKKIEEAK) form a coiled coil. 3 helical membrane passes run 293-313 (FKIG…IGIF), 350-370 (YIGI…SYLV), and 396-416 (IPAS…VISG).

It belongs to the ABC-4 integral membrane protein family. In terms of assembly, the complex is composed of 2 ATP-binding proteins (YtrB and YtrE), 2 transmembrane proteins (YtrC and YtrD) and a solute-binding protein (YtrF).

The protein localises to the cell membrane. Functionally, part of the ABC transporter complex YtrBCDEF that plays a role in acetoin utilization during stationary phase and sporulation. The polypeptide is ABC transporter permease YtrF (ytrF) (Bacillus subtilis (strain 168)).